The sequence spans 358 residues: Alanine racemase (358 aa).

Residue lysine 35 is the Proton acceptor; specific for D-alanine of the active site. An N6-(pyridoxal phosphate)lysine modification is found at lysine 35. Residue arginine 130 participates in substrate binding. The active-site Proton acceptor; specific for L-alanine is tyrosine 255. Methionine 303 contacts substrate.

This sequence belongs to the alanine racemase family. Pyridoxal 5'-phosphate serves as cofactor.

It carries out the reaction L-alanine = D-alanine. It functions in the pathway amino-acid biosynthesis; D-alanine biosynthesis; D-alanine from L-alanine: step 1/1. Catalyzes the interconversion of L-alanine and D-alanine. May also act on other amino acids. In Shewanella piezotolerans (strain WP3 / JCM 13877), this protein is Alanine racemase (alr).